Here is a 77-residue protein sequence, read N- to C-terminus: MASKTVLVLLLVSVLVSTFCTAKAYPASLEDNFDLDALDDLDDLDLEDFYDLEPADLVLLDMWASMLENSDFEDDFE.

The first 24 residues, 1–24 (MASKTVLVLLLVSVLVSTFCTAKA), serve as a signal peptide directing secretion.

This sequence belongs to the non-disulfide-bridged peptide (NDBP) superfamily. Long chain multifunctional peptide (group 2) family. Expressed by the venom gland.

Its subcellular location is the secreted. This chain is Anionic peptide 17.1, found in Lychas mucronatus (Chinese swimming scorpion).